The primary structure comprises 386 residues: Erythronate-4-phosphate dehydrogenase (386 aa).

Substrate is bound by residues serine 59 and threonine 81. Residue aspartate 162 coordinates NAD(+). Arginine 239 is an active-site residue. Position 262 (aspartate 262) interacts with NAD(+). Residue glutamate 267 is part of the active site. Residue histidine 284 is the Proton donor of the active site. NAD(+) is bound at residue glycine 287. Tyrosine 288 is a substrate binding site.

This sequence belongs to the D-isomer specific 2-hydroxyacid dehydrogenase family. PdxB subfamily. As to quaternary structure, homodimer.

Its subcellular location is the cytoplasm. It carries out the reaction 4-phospho-D-erythronate + NAD(+) = (R)-3-hydroxy-2-oxo-4-phosphooxybutanoate + NADH + H(+). The protein operates within cofactor biosynthesis; pyridoxine 5'-phosphate biosynthesis; pyridoxine 5'-phosphate from D-erythrose 4-phosphate: step 2/5. Its function is as follows. Catalyzes the oxidation of erythronate-4-phosphate to 3-hydroxy-2-oxo-4-phosphonooxybutanoate. The polypeptide is Erythronate-4-phosphate dehydrogenase (Psychrobacter cryohalolentis (strain ATCC BAA-1226 / DSM 17306 / VKM B-2378 / K5)).